Reading from the N-terminus, the 174-residue chain is Co-chaperone protein HscB homolog (174 aa).

The J domain occupies 2–74 (NYFELFKFSP…IRRAEHMLSL (73 aa)).

This sequence belongs to the HscB family. As to quaternary structure, interacts with HscA and stimulates its ATPase activity.

Co-chaperone involved in the maturation of iron-sulfur cluster-containing proteins. Seems to help targeting proteins to be folded toward HscA. This Shewanella sp. (strain ANA-3) protein is Co-chaperone protein HscB homolog.